The sequence spans 144 residues: Interferon-induced transmembrane protein 2 (144 aa).

Methionine 1 carries the N-acetylmethionine modification. The Cytoplasmic portion of the chain corresponds to 1-56; that stretch reads MSHNSQAFLSTNAGLPPSYETIKEEYGVTELGEPSNSAVVRTTVINMPREVSVPDH. Tyrosine 19 is modified (phosphotyrosine). Positions 57–77 form an intramembrane region, helical; it reads VVWSLFNTLFFNACCLGFVAY. Residues cysteine 70, cysteine 71, and cysteine 104 are each lipidated (S-palmitoyl cysteine). Over 78-110 the chain is Cytoplasmic; it reads AYSVKSRDRKMVGDVVGAQAYASTAKCLNISSL. The helical transmembrane segment at 111 to 131 threads the bilayer; that stretch reads IFSILMVIICIIIFSTTSVVV. The Extracellular segment spans residues 132–144; it reads FQSFAQRTPHSGF.

It belongs to the CD225/Dispanin family. In terms of assembly, interacts with CD81. Palmitoylation on membrane-proximal cysteines controls clustering in membrane compartments and antiviral activity. In terms of processing, phosphorylation at Tyr-19 is required for endosomal and lysosomal location. As to expression, predominantly expressed in nascent primordial germ cells, as well as in gonadal germ cells.

Its subcellular location is the cell membrane. It is found in the lysosome membrane. The protein localises to the late endosome membrane. Functionally, IFN-induced antiviral protein which inhibits the entry of viruses to the host cell cytoplasm, permitting endocytosis, but preventing subsequent viral fusion and release of viral contents into the cytosol. Active against multiple viruses, including influenza A virus, SARS coronavirus (SARS-CoV), Marburg virus (MARV) and Ebola virus (EBOV), Dengue virus (DNV) and West Nile virus (WNV). Can inhibit: influenza virus hemagglutinin protein-mediated viral entry, MARV and EBOV GP1,2-mediated viral entry and SARS-CoV S protein-mediated viral entry. Induces cell cycle arrest and mediates apoptosis by caspase activation and in p53-independent manner. This chain is Interferon-induced transmembrane protein 2 (Ifitm2), found in Mus musculus (Mouse).